A 156-amino-acid chain; its full sequence is Small ribosomal subunit protein uS7 (156 aa).

This sequence belongs to the universal ribosomal protein uS7 family. Part of the 30S ribosomal subunit. Contacts proteins S9 and S11.

Functionally, one of the primary rRNA binding proteins, it binds directly to 16S rRNA where it nucleates assembly of the head domain of the 30S subunit. Is located at the subunit interface close to the decoding center, probably blocks exit of the E-site tRNA. The chain is Small ribosomal subunit protein uS7 from Streptococcus sanguinis (strain SK36).